A 549-amino-acid chain; its full sequence is Lipase 1 (549 aa).

The N-terminal stretch at 1–15 is a signal peptide; that stretch reads MELALALSLIASVAA. Cysteines 75 and 112 form a disulfide. The Acyl-ester intermediate role is filled by serine 224. A disulfide bridge links cysteine 283 with cysteine 292. N-linked (GlcNAc...) asparagine glycosylation is present at asparagine 329. Residue glutamate 356 is the Charge relay system of the active site. Asparagine 366 carries an N-linked (GlcNAc...) asparagine glycan. Residue histidine 464 is the Charge relay system of the active site.

Belongs to the type-B carboxylesterase/lipase family.

It catalyses the reaction a triacylglycerol + H2O = a diacylglycerol + a fatty acid + H(+). The sequence is that of Lipase 1 (LIP1) from Diutina rugosa (Yeast).